The primary structure comprises 490 residues: Glutamate--tRNA ligase (490 aa).

The 'HIGH' region motif lies at Pro9 to Gly19. The 'KMSKS' region signature appears at Lys251–Arg255. Lys254 is a binding site for ATP.

This sequence belongs to the class-I aminoacyl-tRNA synthetase family. Glutamate--tRNA ligase type 1 subfamily. In terms of assembly, monomer.

It localises to the cytoplasm. The catalysed reaction is tRNA(Glu) + L-glutamate + ATP = L-glutamyl-tRNA(Glu) + AMP + diphosphate. Functionally, catalyzes the attachment of glutamate to tRNA(Glu) in a two-step reaction: glutamate is first activated by ATP to form Glu-AMP and then transferred to the acceptor end of tRNA(Glu). The chain is Glutamate--tRNA ligase from Borreliella burgdorferi (strain ATCC 35210 / DSM 4680 / CIP 102532 / B31) (Borrelia burgdorferi).